The chain runs to 463 residues: RuvB-like helicase 2 (463 aa).

ATP is bound at residue Gly76–Thr83.

It belongs to the RuvB family. As to quaternary structure, may form heterododecamers with RVB1. Component of the SWR1 chromatin remodeling complex, the INO80 chromatin remodeling complex, and of the R2TP complex.

The protein localises to the nucleus. It catalyses the reaction ATP + H2O = ADP + phosphate + H(+). DNA helicase which participates in several chromatin remodeling complexes, including the SWR1 and the INO80 complexes. The SWR1 complex mediates the ATP-dependent exchange of histone H2A for the H2A variant HZT1 leading to transcriptional regulation of selected genes by chromatin remodeling. The INO80 complex remodels chromatin by shifting nucleosomes and is involved in DNA repair. Also involved in pre-rRNA processing. The polypeptide is RuvB-like helicase 2 (RVB2) (Cryptococcus neoformans var. neoformans serotype D (strain JEC21 / ATCC MYA-565) (Filobasidiella neoformans)).